Consider the following 545-residue polypeptide: Metal transporter NRAT1 (545 aa).

Helical transmembrane passes span 51–71 (FLAH…PSNL), 84–104 (ELLW…TLAA), 128–148 (IFLW…EVLG), 155–175 (ILLK…TLLL), 188–208 (FIIA…LSYL), 234–254 (IALF…ALVL), 278–298 (LAFI…GSIC), 333–353 (VVYA…CTFA), 373–395 (LITR…PSGA), 398–418 (LIIL…IPLL), 437–457 (VVIA…FLVW), and 474–494 (GLIS…VVYL). A disordered region spans residues 516–545 (EAGGTPVVDASAADEDQPAPYRKDLADASM). Over residues 536–545 (YRKDLADASM) the composition is skewed to basic and acidic residues.

The protein belongs to the NRAMP (TC 2.A.55) family. In terms of tissue distribution, expressed at low levels in roots.

The protein localises to the cell membrane. Functionally, metal transporter that transports the trivalent cation aluminum (Al(3+)), but does not seem to transport divalent cations such as iron (Fe(2+)), manganese (Mg(2+)) or Cadmium (Cd(2+)). Involved in Al tolerance by taking up Al in root cells, where it is detoxified by chelation with organic acid anions and sequestration into the vacuoles. This Oryza sativa subsp. japonica (Rice) protein is Metal transporter NRAT1 (NRAT1).